The following is a 113-amino-acid chain: 2Fe-2S ferredoxin (113 aa).

The region spanning 2–104 (PKVIFLPNED…DLVVEIPKYN (103 aa)) is the 2Fe-2S ferredoxin-type domain. Residues cysteine 42, cysteine 48, cysteine 51, and cysteine 87 each contribute to the [2Fe-2S] cluster site.

Belongs to the adrenodoxin/putidaredoxin family. The cofactor is [2Fe-2S] cluster.

Its function is as follows. Ferredoxin are iron-sulfur proteins that transfer electrons in a wide variety of metabolic reactions. This is 2Fe-2S ferredoxin (fdx) from Haemophilus influenzae (strain ATCC 51907 / DSM 11121 / KW20 / Rd).